The primary structure comprises 186 residues: Peptidyl-tRNA hydrolase (186 aa).

Y14 contacts tRNA. H19 serves as the catalytic Proton acceptor. Residues F65, N67, and N113 each coordinate tRNA.

This sequence belongs to the PTH family. In terms of assembly, monomer.

It is found in the cytoplasm. The enzyme catalyses an N-acyl-L-alpha-aminoacyl-tRNA + H2O = an N-acyl-L-amino acid + a tRNA + H(+). In terms of biological role, hydrolyzes ribosome-free peptidyl-tRNAs (with 1 or more amino acids incorporated), which drop off the ribosome during protein synthesis, or as a result of ribosome stalling. Its function is as follows. Catalyzes the release of premature peptidyl moieties from peptidyl-tRNA molecules trapped in stalled 50S ribosomal subunits, and thus maintains levels of free tRNAs and 50S ribosomes. The polypeptide is Peptidyl-tRNA hydrolase (Limosilactobacillus fermentum (strain NBRC 3956 / LMG 18251) (Lactobacillus fermentum)).